A 481-amino-acid chain; its full sequence is Dynein axonemal assembly factor 8 (481 aa).

Disordered regions lie at residues 70-91, 131-233, 306-397, and 415-454; these read DESGTWVTAGRSPSPEPLLVPG, LDTK…EGRP, TWKV…PVAS, and RAFRKGAVPPQLSAKDGPGGQKDQAQEDTGGSQTQRKKHI. 3 positions are modified to phosphoserine: S83, S145, and S147. A compositionally biased stretch (polar residues) spans 144–155; sequence GSQSPPWSSQGE. Residues 163–176 are compositionally biased toward basic and acidic residues; that stretch reads GKLKTEPSDTDFKN. Residues 177–188 are compositionally biased toward basic residues; that stretch reads SAKRRALRRERR. Polar residues predominate over residues 198–211; that stretch reads KVTQAAQNPASGDQ. The segment covering 310-322 has biased composition (basic and acidic residues); the sequence is SADKLQDTEEQVA. Positions 323–336 are enriched in polar residues; it reads RTRSASAESGFQTE. S328 carries the post-translational modification Phosphoserine. Composition is skewed to basic and acidic residues over residues 337–349 and 359–380; these read RVQKRAESRRLKT and RLTEPSDPQEHQSQESSEHSSS.

The protein resides in the dynein axonemal particle. The protein localises to the cytoplasm. Functionally, in cyliated cells, dynein axonemal particle-specific protein required for deployment of ODA to the axoneme. Interacts with outer dynein arm (ODA) subunits. This chain is Dynein axonemal assembly factor 8 (Dnaaf8), found in Rattus norvegicus (Rat).